We begin with the raw amino-acid sequence, 237 residues long: Putative N-acetylmuramoyl-L-alanine amidase (237 aa).

The MurNAc-LAA domain maps to 7–225 (ILIDAGHGGY…IANSIYLGLK (219 aa)).

The protein belongs to the N-acetylmuramoyl-L-alanine amidase 3 family.

The protein localises to the secreted. It catalyses the reaction Hydrolyzes the link between N-acetylmuramoyl residues and L-amino acid residues in certain cell-wall glycopeptides.. Functionally, cell-wall hydrolase involved in septum cleavage during cell division. The sequence is that of Putative N-acetylmuramoyl-L-alanine amidase (amiB) from Buchnera aphidicola subsp. Acyrthosiphon pisum (strain APS) (Acyrthosiphon pisum symbiotic bacterium).